Consider the following 216-residue polypeptide: uncharacterized protein (216 aa).

The first 17 residues, 1–17, serve as a signal peptide directing secretion; sequence MLKKIIILFLGMFLLSA. Cys-18 carries the N-palmitoyl cysteine lipid modification. Cys-18 carries the S-diacylglycerol cysteine lipid modification. Residues 133 to 162 are a coiled coil; sequence SDKEKKIQEELNQIKAMLRETKRDISKYTC.

It localises to the cell membrane. This is an uncharacterized protein from Rickettsia conorii (strain ATCC VR-613 / Malish 7).